We begin with the raw amino-acid sequence, 595 residues long: Elongation factor 4 (595 aa).

The tr-type G domain maps to 2 to 183; that stretch reads KNIRNFCIIA…AIVEQVPAPA (182 aa). Residues 14–19 and 130–133 each bind GTP; these read DHGKST and NKVD.

It belongs to the TRAFAC class translation factor GTPase superfamily. Classic translation factor GTPase family. LepA subfamily.

The protein resides in the cell inner membrane. It carries out the reaction GTP + H2O = GDP + phosphate + H(+). In terms of biological role, required for accurate and efficient protein synthesis under certain stress conditions. May act as a fidelity factor of the translation reaction, by catalyzing a one-codon backward translocation of tRNAs on improperly translocated ribosomes. Back-translocation proceeds from a post-translocation (POST) complex to a pre-translocation (PRE) complex, thus giving elongation factor G a second chance to translocate the tRNAs correctly. Binds to ribosomes in a GTP-dependent manner. The protein is Elongation factor 4 of Porphyromonas gingivalis (strain ATCC 33277 / DSM 20709 / CIP 103683 / JCM 12257 / NCTC 11834 / 2561).